A 285-amino-acid polypeptide reads, in one-letter code: Shikimate dehydrogenase (NADP(+)) (285 aa).

Shikimate contacts are provided by residues 20-22 and Ser67; that span reads SIS. Lys71 acts as the Proton acceptor in catalysis. Glu83 provides a ligand contact to NADP(+). Shikimate is bound by residues Asn92 and Asp107. Residues 129-133 and Met227 contribute to the NADP(+) site; that span reads GAGGA. Tyr229 lines the shikimate pocket. Residue Gly250 coordinates NADP(+).

The protein belongs to the shikimate dehydrogenase family. Homodimer.

The catalysed reaction is shikimate + NADP(+) = 3-dehydroshikimate + NADPH + H(+). It functions in the pathway metabolic intermediate biosynthesis; chorismate biosynthesis; chorismate from D-erythrose 4-phosphate and phosphoenolpyruvate: step 4/7. Functionally, involved in the biosynthesis of the chorismate, which leads to the biosynthesis of aromatic amino acids. Catalyzes the reversible NADPH linked reduction of 3-dehydroshikimate (DHSA) to yield shikimate (SA). This is Shikimate dehydrogenase (NADP(+)) from Streptococcus gordonii (strain Challis / ATCC 35105 / BCRC 15272 / CH1 / DL1 / V288).